The sequence spans 443 residues: L-ornithine N(5)-monooxygenase (443 aa).

Residues 45 to 53 (DKQGDYRWH) and Gln64 contribute to the FAD site. Lys69 provides a ligand contact to substrate. Val130 is a binding site for FAD. NADP(+) contacts are provided by residues 215–218 (GGQS) and Arg240. Substrate is bound by residues 254–257 (NEVF) and Asn284. An NADP(+)-binding site is contributed by 284 to 286 (NYS). 407-409 (TLL) is a binding site for FAD. Ser410 is a binding site for substrate.

It belongs to the lysine N(6)-hydroxylase/L-ornithine N(5)-oxygenase family. Homotetramer. FAD serves as cofactor.

The protein localises to the cell inner membrane. The catalysed reaction is L-ornithine + NADPH + O2 = N(5)-hydroxy-L-ornithine + NADP(+) + H2O. The protein operates within siderophore biosynthesis; pyoverdin biosynthesis. Functionally, catalyzes the conversion of L-ornithine to N(5)-hydroxyornithine, the first step in the biosynthesis of all hydroxamate-containing siderophores, such as pyoverdin. Pyoverdin is a hydroxamate siderophore composed of a 6,7-dihydroxyquinoline-containing fluorescent chromophore joined to the N-terminus of a partly cyclic octapeptide (D-Ser-L-Arg-D-Ser-L-N(5)-OH-Orn-L-Lys-L-N(5)-OH-Orn-L-Thr-L-Thr in strain PAO1). Specific for NADPH, which plays a role in stabilization of the C4a-hydroperoxyflavin intermediate. The chain is L-ornithine N(5)-monooxygenase from Pseudomonas aeruginosa (strain ATCC 15692 / DSM 22644 / CIP 104116 / JCM 14847 / LMG 12228 / 1C / PRS 101 / PAO1).